We begin with the raw amino-acid sequence, 432 residues long: 3-phosphoshikimate 1-carboxyvinyltransferase (432 aa).

3-phosphoshikimate-binding residues include lysine 22, serine 23, and arginine 27. Position 22 (lysine 22) interacts with phosphoenolpyruvate. Residues glycine 96 and arginine 127 each coordinate phosphoenolpyruvate. The 3-phosphoshikimate site is built by serine 173, serine 174, glutamine 175, serine 201, aspartate 316, asparagine 339, and lysine 343. Phosphoenolpyruvate is bound at residue glutamine 175. Aspartate 316 (proton acceptor) is an active-site residue. Phosphoenolpyruvate contacts are provided by arginine 347, arginine 391, and lysine 416.

It belongs to the EPSP synthase family. As to quaternary structure, monomer.

It localises to the cytoplasm. The catalysed reaction is 3-phosphoshikimate + phosphoenolpyruvate = 5-O-(1-carboxyvinyl)-3-phosphoshikimate + phosphate. Its pathway is metabolic intermediate biosynthesis; chorismate biosynthesis; chorismate from D-erythrose 4-phosphate and phosphoenolpyruvate: step 6/7. Functionally, catalyzes the transfer of the enolpyruvyl moiety of phosphoenolpyruvate (PEP) to the 5-hydroxyl of shikimate-3-phosphate (S3P) to produce enolpyruvyl shikimate-3-phosphate and inorganic phosphate. In Actinobacillus pleuropneumoniae serotype 7 (strain AP76), this protein is 3-phosphoshikimate 1-carboxyvinyltransferase.